Consider the following 396-residue polypeptide: L-tyrosine/L-aspartate decarboxylase (396 aa).

Residue Lys245 is modified to N6-(pyridoxal phosphate)lysine.

Belongs to the group II decarboxylase family. MfnA subfamily. Homodimer. Pyridoxal 5'-phosphate is required as a cofactor.

The enzyme catalyses L-tyrosine + H(+) = tyramine + CO2. The catalysed reaction is L-aspartate + H(+) = beta-alanine + CO2. The protein operates within cofactor biosynthesis; methanofuran biosynthesis. Its pathway is cofactor biosynthesis; coenzyme A biosynthesis. Its activity is regulated as follows. Inhibited by hydroxylamine and O-methylhydroxylamine. Functionally, catalyzes the decarboxylation of L-tyrosine to produce tyramine for methanofuran biosynthesis. Can also catalyze the decarboxylation of L-aspartate to produce beta-alanine for coenzyme A (CoA) biosynthesis. The protein is L-tyrosine/L-aspartate decarboxylase of Methanocaldococcus jannaschii (strain ATCC 43067 / DSM 2661 / JAL-1 / JCM 10045 / NBRC 100440) (Methanococcus jannaschii).